The following is a 260-amino-acid chain: NH(3)-dependent NAD(+) synthetase (260 aa).

31 to 38 serves as a coordination point for ATP; the sequence is GLSGGLDS. Asp37 contacts Mg(2+). Residue Arg112 participates in deamido-NAD(+) binding. Thr132 provides a ligand contact to ATP. Position 137 (Glu137) interacts with Mg(2+). Lys161 and Ser183 together coordinate ATP.

Belongs to the NAD synthetase family. Homodimer.

It catalyses the reaction deamido-NAD(+) + NH4(+) + ATP = AMP + diphosphate + NAD(+) + H(+). Its pathway is cofactor biosynthesis; NAD(+) biosynthesis; NAD(+) from deamido-NAD(+) (ammonia route): step 1/1. In terms of biological role, catalyzes the ATP-dependent amidation of deamido-NAD to form NAD. Uses ammonia as a nitrogen source. This is NH(3)-dependent NAD(+) synthetase from Helicobacter pylori (strain HPAG1).